A 320-amino-acid chain; its full sequence is HPr kinase/phosphorylase (320 aa).

Catalysis depends on residues histidine 141 and lysine 162. ATP is bound at residue 156–163; sequence GHSGLGKS. Serine 163 contacts Mg(2+). Aspartate 180 serves as the catalytic Proton acceptor; for phosphorylation activity. Proton donor; for dephosphorylation activity. Residues 204 to 213 form an important for the catalytic mechanism of both phosphorylation and dephosphorylation region; sequence LEVRGLGILN. A Mg(2+)-binding site is contributed by glutamate 205. Arginine 248 is a catalytic residue. Positions 269 to 274 are important for the catalytic mechanism of dephosphorylation; that stretch reads PVAVGR.

Belongs to the HPrK/P family. In terms of assembly, homohexamer. It depends on Mg(2+) as a cofactor.

The enzyme catalyses [HPr protein]-L-serine + ATP = [HPr protein]-O-phospho-L-serine + ADP + H(+). It catalyses the reaction [HPr protein]-O-phospho-L-serine + phosphate + H(+) = [HPr protein]-L-serine + diphosphate. Its function is as follows. Catalyzes the ATP- as well as the pyrophosphate-dependent phosphorylation of a specific serine residue in HPr, a phosphocarrier protein of the phosphoenolpyruvate-dependent sugar phosphotransferase system (PTS). HprK/P also catalyzes the pyrophosphate-producing, inorganic phosphate-dependent dephosphorylation (phosphorolysis) of seryl-phosphorylated HPr (P-Ser-HPr). This Neisseria meningitidis serogroup B (strain ATCC BAA-335 / MC58) protein is HPr kinase/phosphorylase.